Reading from the N-terminus, the 216-residue chain is Adenylate kinase (216 aa).

Residue 10 to 15 (GAGKGT) coordinates ATP. Residues 30–59 (STGDMFRAAMKNETALGLEAKSYIDKGELV) are NMP. AMP contacts are provided by residues T31, R36, 57 to 59 (ELV), 85 to 88 (GFPR), and Q92. Residues 126-164 (GRFICRTCGATYHKLFNPPKVEGTCDRCGGHEFYQREDD) are LID. R127 is an ATP binding site. Zn(2+) is bound by residues C130 and C133. Residue 136 to 137 (TY) participates in ATP binding. Positions 150 and 153 each coordinate Zn(2+). The AMP site is built by R161 and R172. R200 serves as a coordination point for ATP.

The protein belongs to the adenylate kinase family. Monomer.

It is found in the cytoplasm. It carries out the reaction AMP + ATP = 2 ADP. It functions in the pathway purine metabolism; AMP biosynthesis via salvage pathway; AMP from ADP: step 1/1. Functionally, catalyzes the reversible transfer of the terminal phosphate group between ATP and AMP. Plays an important role in cellular energy homeostasis and in adenine nucleotide metabolism. In Enterococcus faecalis (strain ATCC 700802 / V583), this protein is Adenylate kinase.